The chain runs to 405 residues: Glucose-1-phosphate adenylyltransferase 1 (405 aa).

Residues Tyr-96, Gly-161, 176–177 (EK), and Ser-194 contribute to the alpha-D-glucose 1-phosphate site.

It belongs to the bacterial/plant glucose-1-phosphate adenylyltransferase family. As to quaternary structure, homotetramer.

It carries out the reaction alpha-D-glucose 1-phosphate + ATP + H(+) = ADP-alpha-D-glucose + diphosphate. It functions in the pathway glycan biosynthesis; glycogen biosynthesis. Its function is as follows. Involved in the biosynthesis of ADP-glucose, a building block required for the elongation reactions to produce glycogen. Catalyzes the reaction between ATP and alpha-D-glucose 1-phosphate (G1P) to produce pyrophosphate and ADP-Glc. The protein is Glucose-1-phosphate adenylyltransferase 1 of Vibrio cholerae serotype O1 (strain ATCC 39315 / El Tor Inaba N16961).